The primary structure comprises 410 residues: Dihydrolipoyllysine-residue succinyltransferase component of 2-oxoglutarate dehydrogenase complex (410 aa).

A Lipoyl-binding domain is found at 3–81 (IINIFIPDLP…QVIGTLLKIG (79 aa)). Lys44 carries the post-translational modification N6-lipoyllysine. In terms of domain architecture, Peripheral subunit-binding (PSBD) spans 112-150 (TYSPTVRRLISMHDLRDVDIIQGTGTKNRLTRKDILNYL). Residues His381 and Asp385 contribute to the active site.

The protein belongs to the 2-oxoacid dehydrogenase family. Forms a 24-polypeptide structural core with octahedral symmetry. Part of the 2-oxoglutarate dehydrogenase (OGDH) complex composed of E1 (2-oxoglutarate dehydrogenase), E2 (dihydrolipoamide succinyltransferase) and E3 (dihydrolipoamide dehydrogenase); the complex contains multiple copies of the three enzymatic components (E1, E2 and E3). (R)-lipoate serves as cofactor.

It catalyses the reaction N(6)-[(R)-dihydrolipoyl]-L-lysyl-[protein] + succinyl-CoA = N(6)-[(R)-S(8)-succinyldihydrolipoyl]-L-lysyl-[protein] + CoA. It functions in the pathway amino-acid degradation; L-lysine degradation via saccharopine pathway; glutaryl-CoA from L-lysine: step 6/6. Its function is as follows. E2 component of the 2-oxoglutarate dehydrogenase (OGDH) complex which catalyzes the second step in the conversion of 2-oxoglutarate to succinyl-CoA and CO(2). The protein is Dihydrolipoyllysine-residue succinyltransferase component of 2-oxoglutarate dehydrogenase complex (sucB) of Buchnera aphidicola subsp. Baizongia pistaciae (strain Bp).